The sequence spans 413 residues: Glutamyl-tRNA reductase (413 aa).

Residues 49-52 (TCNR), Ser105, 110-112 (EPQ), and Gln116 each bind substrate. The active-site Nucleophile is Cys50. 185-190 (GAGETI) is an NADP(+) binding site.

The protein belongs to the glutamyl-tRNA reductase family. In terms of assembly, homodimer.

The enzyme catalyses (S)-4-amino-5-oxopentanoate + tRNA(Glu) + NADP(+) = L-glutamyl-tRNA(Glu) + NADPH + H(+). The protein operates within porphyrin-containing compound metabolism; protoporphyrin-IX biosynthesis; 5-aminolevulinate from L-glutamyl-tRNA(Glu): step 1/2. Its function is as follows. Catalyzes the NADPH-dependent reduction of glutamyl-tRNA(Glu) to glutamate 1-semialdehyde (GSA). The chain is Glutamyl-tRNA reductase from Coxiella burnetii (strain Dugway 5J108-111).